The primary structure comprises 449 residues: Phosphomannomutase (449 aa).

Catalysis depends on Ser-97, which acts as the Phosphoserine intermediate. Residues Ser-97, Asp-237, Asp-239, and Asp-241 each contribute to the Mg(2+) site.

It belongs to the phosphohexose mutase family. It depends on Mg(2+) as a cofactor.

The catalysed reaction is alpha-D-mannose 1-phosphate = D-mannose 6-phosphate. It functions in the pathway amino-acid biosynthesis. In terms of biological role, catalyzes the formation of mannose-1-P from mannose-6-P. Can also use glucose-6-P. This is Phosphomannomutase (manB) from Methanocaldococcus jannaschii (strain ATCC 43067 / DSM 2661 / JAL-1 / JCM 10045 / NBRC 100440) (Methanococcus jannaschii).